We begin with the raw amino-acid sequence, 279 residues long: Pantothenate synthetase (279 aa).

26–33 is an ATP binding site; sequence MGNLHEGH. The Proton donor role is filled by H33. Q57 is a binding site for (R)-pantoate. Beta-alanine is bound at residue Q57. 144–147 is an ATP binding site; the sequence is GKKD. Q150 lines the (R)-pantoate pocket. ATP-binding positions include V173 and 181-184; that span reads LSSR.

This sequence belongs to the pantothenate synthetase family. In terms of assembly, homodimer.

It localises to the cytoplasm. It carries out the reaction (R)-pantoate + beta-alanine + ATP = (R)-pantothenate + AMP + diphosphate + H(+). It functions in the pathway cofactor biosynthesis; (R)-pantothenate biosynthesis; (R)-pantothenate from (R)-pantoate and beta-alanine: step 1/1. Functionally, catalyzes the condensation of pantoate with beta-alanine in an ATP-dependent reaction via a pantoyl-adenylate intermediate. This is Pantothenate synthetase from Burkholderia cenocepacia (strain HI2424).